A 359-amino-acid polypeptide reads, in one-letter code: Guanine nucleotide-binding protein subunit alpha-11 (359 aa).

Residues C9 and C10 are each lipidated (S-palmitoyl cysteine). The region spanning 38–359 is the G-alpha domain; the sequence is RELKLLLLGT…QLNLKEYNLV (322 aa). The tract at residues 41 to 54 is G1 motif; it reads KLLLLGTGESGKST. GTP is bound by residues 46–53 and 180–183; these read GTGESGKS and LRVR. S53 is a Mg(2+) binding site. Positions 178 to 186 are G2 motif; that stretch reads DVLRVRVPT. Residue T186 participates in Mg(2+) binding. The tract at residues 201–210 is G3 motif; that stretch reads FRMVDVGGQR. The tract at residues 270-277 is G4 motif; the sequence is ILFLNKKD. Residues 274–277 and A331 contribute to the GTP site; that span reads NKKD. Residues 329-334 form a G5 motif region; sequence TCATDT.

It belongs to the G-alpha family. G(q) subfamily. G proteins are composed of 3 units; alpha, beta and gamma. The alpha chain contains the guanine nucleotide binding site. Interacts with RGS22. Interacts with NTSR1.

It is found in the cell membrane. The protein resides in the cytoplasm. It catalyses the reaction GTP + H2O = GDP + phosphate + H(+). Its function is as follows. Guanine nucleotide-binding proteins (G proteins) function as transducers downstream of G protein-coupled receptors (GPCRs) in numerous signaling cascades. The alpha chain contains the guanine nucleotide binding site and alternates between an active, GTP-bound state and an inactive, GDP-bound state. Signaling by an activated GPCR promotes GDP release and GTP binding. The alpha subunit has a low GTPase activity that converts bound GTP to GDP, thereby terminating the signal. Both GDP release and GTP hydrolysis are modulated by numerous regulatory proteins. Signaling is mediated via phospholipase C-beta-dependent inositol lipid hydrolysis for signal propagation: activates phospholipase C-beta: following GPCR activation, GNA11 activates PLC-beta (PLCB1, PLCB2, PLCB3 or PLCB4), leading to production of diacylglycerol (DAG) and inositol 1,4,5-trisphosphate (IP3). Transduces FFAR4 signaling in response to long-chain fatty acids (LCFAs). Together with GNAQ, required for heart development. In the respiratory epithelium, transmits OXGR1-dependent signals that lead to downstream intracellular Ca(2+) release and mucocilliary clearance of airborne pathogens. The protein is Guanine nucleotide-binding protein subunit alpha-11 (Gna11) of Rattus norvegicus (Rat).